We begin with the raw amino-acid sequence, 188 residues long: Elongation factor P (188 aa).

Belongs to the elongation factor P family.

The protein localises to the cytoplasm. It participates in protein biosynthesis; polypeptide chain elongation. In terms of biological role, involved in peptide bond synthesis. Stimulates efficient translation and peptide-bond synthesis on native or reconstituted 70S ribosomes in vitro. Probably functions indirectly by altering the affinity of the ribosome for aminoacyl-tRNA, thus increasing their reactivity as acceptors for peptidyl transferase. The protein is Elongation factor P of Rickettsia massiliae (strain Mtu5).